Consider the following 316-residue polypeptide: 4-hydroxy-3-methylbut-2-enyl diphosphate reductase (316 aa).

Cys12 provides a ligand contact to [4Fe-4S] cluster. (2E)-4-hydroxy-3-methylbut-2-enyl diphosphate is bound by residues His43 and His81. Residues His43 and His81 each coordinate dimethylallyl diphosphate. Isopentenyl diphosphate contacts are provided by His43 and His81. A [4Fe-4S] cluster-binding site is contributed by Cys103. His131 serves as a coordination point for (2E)-4-hydroxy-3-methylbut-2-enyl diphosphate. Dimethylallyl diphosphate is bound at residue His131. His131 is a binding site for isopentenyl diphosphate. Glu133 acts as the Proton donor in catalysis. A (2E)-4-hydroxy-3-methylbut-2-enyl diphosphate-binding site is contributed by Thr170. Position 198 (Cys198) interacts with [4Fe-4S] cluster. Residues Ser226, Asn228, and Ser271 each coordinate (2E)-4-hydroxy-3-methylbut-2-enyl diphosphate. Dimethylallyl diphosphate-binding residues include Ser226, Asn228, and Ser271. Residues Ser226, Asn228, and Ser271 each contribute to the isopentenyl diphosphate site.

The protein belongs to the IspH family. It depends on [4Fe-4S] cluster as a cofactor.

It carries out the reaction isopentenyl diphosphate + 2 oxidized [2Fe-2S]-[ferredoxin] + H2O = (2E)-4-hydroxy-3-methylbut-2-enyl diphosphate + 2 reduced [2Fe-2S]-[ferredoxin] + 2 H(+). The enzyme catalyses dimethylallyl diphosphate + 2 oxidized [2Fe-2S]-[ferredoxin] + H2O = (2E)-4-hydroxy-3-methylbut-2-enyl diphosphate + 2 reduced [2Fe-2S]-[ferredoxin] + 2 H(+). The protein operates within isoprenoid biosynthesis; dimethylallyl diphosphate biosynthesis; dimethylallyl diphosphate from (2E)-4-hydroxy-3-methylbutenyl diphosphate: step 1/1. It functions in the pathway isoprenoid biosynthesis; isopentenyl diphosphate biosynthesis via DXP pathway; isopentenyl diphosphate from 1-deoxy-D-xylulose 5-phosphate: step 6/6. In terms of biological role, catalyzes the conversion of 1-hydroxy-2-methyl-2-(E)-butenyl 4-diphosphate (HMBPP) into a mixture of isopentenyl diphosphate (IPP) and dimethylallyl diphosphate (DMAPP). Acts in the terminal step of the DOXP/MEP pathway for isoprenoid precursor biosynthesis. This chain is 4-hydroxy-3-methylbut-2-enyl diphosphate reductase, found in Geobacillus thermodenitrificans (strain NG80-2).